The chain runs to 330 residues: Aspartate--ammonia ligase (330 aa).

The protein belongs to the class-II aminoacyl-tRNA synthetase family. AsnA subfamily.

Its subcellular location is the cytoplasm. It catalyses the reaction L-aspartate + NH4(+) + ATP = L-asparagine + AMP + diphosphate + H(+). The protein operates within amino-acid biosynthesis; L-asparagine biosynthesis; L-asparagine from L-aspartate (ammonia route): step 1/1. The chain is Aspartate--ammonia ligase from Streptococcus uberis (strain ATCC BAA-854 / 0140J).